We begin with the raw amino-acid sequence, 473 residues long: Aspartyl aminopeptidase 1 (473 aa).

Position 93 (His93) interacts with Zn(2+). Substrate is bound at residue His168. Asp262, Glu298, Glu299, and Asp343 together coordinate Zn(2+). Substrate is bound at residue Glu298. Residues Asp343, His346, Lys371, and Tyr378 each coordinate substrate. His437 lines the Zn(2+) pocket.

The protein belongs to the peptidase M18 family. As to quaternary structure, tetrahedron-shaped homododecamer built from six homodimers. Interacts with autophagy receptor Nbr1. It depends on Zn(2+) as a cofactor.

The protein localises to the cytoplasm. It is found in the vacuole lumen. It carries out the reaction Release of an N-terminal aspartate or glutamate from a peptide, with a preference for aspartate.. Aspartyl aminopeptidase that is able to remove aspartyl residue at N-terminus of angiotensin I. Also acts as a chaperone and efficiently suppressed the thermal aggregation of citrate synthase. The protein is Aspartyl aminopeptidase 1 (ape4) of Schizosaccharomyces pombe (strain 972 / ATCC 24843) (Fission yeast).